The primary structure comprises 640 residues: MEAALLRPPPLAARGGVSIAIAFSVSRLPSAAAAAAAGKPRKLAPPACRCRATPQWQLDFLGAEADTEADGGDDDDDLDLDLSLPAETNDWCVRARRSALRSIEARGLSPSLQRMVASPKKKNKKKKSKKTNLKQKKAAEPKPPRDTDDDEDDEEEADDDLEALLAGGGELDDLELRVAQFADGMFDEKRQRNREQFIQTLSAFSPAAPSNRSQEVSLNRSIVEARTADEVLALTAEVVAAVAKGLSPSPLTPLNIATALHRIAKNMEAVSMLQTHRLGFARSRDMSMLVGLAMVALPECSPQGVSNISWALSKIGGDLLYLPEMDRIAQVAITKVDSFNAQNVANVAGSFASMRHSAPDLISALTRRAAELVYTFKEQELAQFLWGCASLNECPYPLLDALDTACRDAPSFDCHLHDTVPGMWQSSDKEASSLKNSSNAYALNFTRDQIGNIAWSYAVLGQMDRPFFSGIWKTLSQFEERKISDQYREDMMFVSQVYLANQSLKLEYPHLDMCLRGDLEENLTKTGRSKRFNQKMTSSFQKEVGRLLCSTGHEWNKEYTIDGYTVDAVLVDEKLAFEIDGPSHFSRNLGTPLGHTAFKRRYIAAAGWNLVSLSHQEWENLEGEFEQLEYLRRILGFDAE.

The transit peptide at Met1–Ala32 directs the protein to the chloroplast. The tract at residues Ser111 to Asp158 is disordered. Basic residues predominate over residues Pro119–Lys136. Over residues Lys137–Asp146 the composition is skewed to basic and acidic residues. Positions Thr147–Asp158 are enriched in acidic residues. One can recognise an RAP domain in the interval Leu575–Arg633.

As to expression, expressed in roots, leaf sheaths, veins of leaf blade, mature leaves, endodermis of culm, panicles and anthers.

It is found in the plastid. The protein localises to the chloroplast. In terms of biological role, probable RNA-binding protein that plays an essential role in chloroplast development. Regulates the ribosomal proteins homeostasis and ribosomal RNA development in chloroplasts. Involved the regulation of 16S rRNA and required for the expression of chloroplast-associated photosynthetic genes. This chain is RAP domain-containing protein, chloroplastic, found in Oryza sativa subsp. japonica (Rice).